The following is a 163-amino-acid chain: Phosphopantetheine adenylyltransferase (163 aa).

Substrate is bound at residue Ser-9. ATP contacts are provided by residues 9-10 (SF) and His-17. Residues Lys-41, Ile-75, and Arg-89 each coordinate substrate. ATP-binding positions include 90 to 92 (GIR), Glu-100, and 125 to 131 (HLYVRSD).

The protein belongs to the bacterial CoaD family. As to quaternary structure, homohexamer. Mg(2+) is required as a cofactor.

It localises to the cytoplasm. The catalysed reaction is (R)-4'-phosphopantetheine + ATP + H(+) = 3'-dephospho-CoA + diphosphate. Its pathway is cofactor biosynthesis; coenzyme A biosynthesis; CoA from (R)-pantothenate: step 4/5. Its function is as follows. Reversibly transfers an adenylyl group from ATP to 4'-phosphopantetheine, yielding dephospho-CoA (dPCoA) and pyrophosphate. The protein is Phosphopantetheine adenylyltransferase of Borrelia garinii subsp. bavariensis (strain ATCC BAA-2496 / DSM 23469 / PBi) (Borreliella bavariensis).